The primary structure comprises 442 residues: Exodeoxyribonuclease 7 large subunit (442 aa).

The protein belongs to the XseA family. As to quaternary structure, heterooligomer composed of large and small subunits.

The protein resides in the cytoplasm. The enzyme catalyses Exonucleolytic cleavage in either 5'- to 3'- or 3'- to 5'-direction to yield nucleoside 5'-phosphates.. Bidirectionally degrades single-stranded DNA into large acid-insoluble oligonucleotides, which are then degraded further into small acid-soluble oligonucleotides. The sequence is that of Exodeoxyribonuclease 7 large subunit from Shewanella sediminis (strain HAW-EB3).